The primary structure comprises 145 residues: D-aminoacyl-tRNA deacylase (145 aa).

The Gly-cisPro motif, important for rejection of L-amino acids signature appears at 137–138 (GP).

Belongs to the DTD family. Homodimer.

It localises to the cytoplasm. It catalyses the reaction glycyl-tRNA(Ala) + H2O = tRNA(Ala) + glycine + H(+). The catalysed reaction is a D-aminoacyl-tRNA + H2O = a tRNA + a D-alpha-amino acid + H(+). An aminoacyl-tRNA editing enzyme that deacylates mischarged D-aminoacyl-tRNAs. Also deacylates mischarged glycyl-tRNA(Ala), protecting cells against glycine mischarging by AlaRS. Acts via tRNA-based rather than protein-based catalysis; rejects L-amino acids rather than detecting D-amino acids in the active site. By recycling D-aminoacyl-tRNA to D-amino acids and free tRNA molecules, this enzyme counteracts the toxicity associated with the formation of D-aminoacyl-tRNA entities in vivo and helps enforce protein L-homochirality. This is D-aminoacyl-tRNA deacylase from Salmonella agona (strain SL483).